The chain runs to 448 residues: Extracellular serine protease (448 aa).

The first 20 residues, 1–20 (MKLSHLSLAIISAITLAACG), serve as a signal peptide directing secretion. The segment at 87–109 (KELENQASDDEVDPTKTGVVGNL) is disordered.

The protein belongs to the peptidase S17 family. Requires a divalent metal cation as cofactor.

This enzyme is a chymotrypsin-like serine protease. Degrades a variety of substrates present in the skin and hoof of the sheep, including elastin, keratin, fibrinogen and collagen. It seems to play an important role in the pathogenesis of sheep footrot. The polypeptide is Extracellular serine protease (prvA) (Dichelobacter nodosus (Bacteroides nodosus)).